A 128-amino-acid polypeptide reads, in one-letter code: Ribonuclease P protein component 4 (128 aa).

Residues Cys67, Cys70, Cys96, and Cys99 each coordinate Zn(2+).

The protein belongs to the eukaryotic/archaeal RNase P protein component 4 family. As to quaternary structure, consists of a catalytic RNA component and at least 4-5 protein subunits. Zn(2+) is required as a cofactor.

The protein resides in the cytoplasm. The enzyme catalyses Endonucleolytic cleavage of RNA, removing 5'-extranucleotides from tRNA precursor.. Functionally, part of ribonuclease P, a protein complex that generates mature tRNA molecules by cleaving their 5'-ends. This chain is Ribonuclease P protein component 4, found in Methanopyrus kandleri (strain AV19 / DSM 6324 / JCM 9639 / NBRC 100938).